The primary structure comprises 478 residues: Membrane-bound lytic murein transglycosylase F (478 aa).

The N-terminal stretch at 1–22 (MTRFLFAIILGLLLTACQQETV) is a signal peptide. Residues 23-257 (EETEFVPHKL…HLNEKYFGHV (235 aa)) form a non-LT domain region. The interval 258–478 (KRFDYIDTRA…PGTLSPDKPK (221 aa)) is LT domain. Glu302 is an active-site residue. Residues 447–478 (KQQNSEEVAPSDLTAEETPVPAPGTLSPDKPK) are disordered.

In the N-terminal section; belongs to the bacterial solute-binding protein 3 family. It in the C-terminal section; belongs to the transglycosylase Slt family.

It is found in the cell outer membrane. The enzyme catalyses Exolytic cleavage of the (1-&gt;4)-beta-glycosidic linkage between N-acetylmuramic acid (MurNAc) and N-acetylglucosamine (GlcNAc) residues in peptidoglycan, from either the reducing or the non-reducing ends of the peptidoglycan chains, with concomitant formation of a 1,6-anhydrobond in the MurNAc residue.. Functionally, murein-degrading enzyme that degrades murein glycan strands and insoluble, high-molecular weight murein sacculi, with the concomitant formation of a 1,6-anhydromuramoyl product. Lytic transglycosylases (LTs) play an integral role in the metabolism of the peptidoglycan (PG) sacculus. Their lytic action creates space within the PG sacculus to allow for its expansion as well as for the insertion of various structures such as secretion systems and flagella. The protein is Membrane-bound lytic murein transglycosylase F of Shewanella oneidensis (strain ATCC 700550 / JCM 31522 / CIP 106686 / LMG 19005 / NCIMB 14063 / MR-1).